The sequence spans 194 residues: UPF0215 protein Mbar_A0619 (194 aa).

This sequence belongs to the UPF0215 family.

This chain is UPF0215 protein Mbar_A0619, found in Methanosarcina barkeri (strain Fusaro / DSM 804).